Reading from the N-terminus, the 275-residue chain is Cell division protein FtsQ (275 aa).

The segment at 1–20 (MRDLHKKKPRPVTQNRLKKP) is disordered. Residues 1–38 (MRDLHKKKPRPVTQNRLKKPPKTCKPINYRGILKKTAK) lie on the Cytoplasmic side of the membrane. Residues 39 to 61 (VVGGAALISAVGCAGYGIYRIIA) form a helical membrane-spanning segment. The Periplasmic portion of the chain corresponds to 62 to 275 (GTTFFKLERI…YSDKIIVKKV (214 aa)). The 69-residue stretch at 66–134 (FKLERIEVSE…NTLSMQIAER (69 aa)) folds into the POTRA domain.

This sequence belongs to the FtsQ/DivIB family. FtsQ subfamily.

Its subcellular location is the cell inner membrane. Its function is as follows. Essential cell division protein. The chain is Cell division protein FtsQ from Geotalea daltonii (strain DSM 22248 / JCM 15807 / FRC-32) (Geobacter daltonii).